The following is a 211-amino-acid chain: Uracil phosphoribosyltransferase (211 aa).

5-phospho-alpha-D-ribose 1-diphosphate-binding positions include R78, R103, and 130–138; that span reads DPMLATGNS. Uracil contacts are provided by residues I193 and 198-200; that span reads GDA. A 5-phospho-alpha-D-ribose 1-diphosphate-binding site is contributed by D199.

It belongs to the UPRTase family. It depends on Mg(2+) as a cofactor.

It catalyses the reaction UMP + diphosphate = 5-phospho-alpha-D-ribose 1-diphosphate + uracil. It functions in the pathway pyrimidine metabolism; UMP biosynthesis via salvage pathway; UMP from uracil: step 1/1. With respect to regulation, allosterically activated by GTP. Functionally, catalyzes the conversion of uracil and 5-phospho-alpha-D-ribose 1-diphosphate (PRPP) to UMP and diphosphate. This is Uracil phosphoribosyltransferase from Acinetobacter baumannii (strain ATCC 17978 / DSM 105126 / CIP 53.77 / LMG 1025 / NCDC KC755 / 5377).